A 367-amino-acid polypeptide reads, in one-letter code: Putative ionic transporter y4hA (367 aa).

The next 11 membrane-spanning stretches (helical) occupy residues 12–32 (VPLW…MTLA), 39–59 (SVVL…ASVH), 74–94 (AILL…SLML), 108–128 (VFAA…VLGG), 143–163 (AALA…NFVT), 172–192 (AIQL…FLFV), 221–241 (LAAG…AMLL), 249–269 (VEAL…VVLL), 291–311 (VLGS…AISV), 318–338 (ALGL…VGTI), and 347–367 (VLQG…SAIP).

It belongs to the Ca(2+):cation antiporter (CaCA) (TC 2.A.19) family.

Its subcellular location is the cell membrane. Possible cation transporter. This Sinorhizobium fredii (strain NBRC 101917 / NGR234) protein is Putative ionic transporter y4hA.